The chain runs to 92 residues: Small ribosomal subunit protein uS19 (92 aa).

The protein belongs to the universal ribosomal protein uS19 family.

In terms of biological role, protein S19 forms a complex with S13 that binds strongly to the 16S ribosomal RNA. This chain is Small ribosomal subunit protein uS19, found in Jannaschia sp. (strain CCS1).